The following is a 156-amino-acid chain: Cyanate hydratase (156 aa).

Active-site residues include R96, E99, and S122.

This sequence belongs to the cyanase family.

It carries out the reaction cyanate + hydrogencarbonate + 3 H(+) = NH4(+) + 2 CO2. In terms of biological role, catalyzes the reaction of cyanate with bicarbonate to produce ammonia and carbon dioxide. This Burkholderia ambifaria (strain MC40-6) protein is Cyanate hydratase.